Here is a 647-residue protein sequence, read N- to C-terminus: Homologous recombination OB-fold protein (647 aa).

A Phosphoserine modification is found at Ser-47. Disordered stretches follow at residues 284–361 (ARGT…GPQG), 380–399 (SRTP…RRFP), and 581–631 (SFLK…DDLD). 4 positions are modified to asymmetric dimethylarginine: Arg-285, Arg-295, Arg-329, and Arg-337. Residues 287–308 (TIQSSPQNRFPCQPFQSPSSWL) show a composition bias toward polar residues. Over residues 319–332 (TPNSSCSTPSRTSS) the composition is skewed to low complexity. The span at 380 to 390 (SRTPQQPTHPS) shows a compositional bias: polar residues. A compositionally biased stretch (acidic residues) spans 618 to 631 (ASPEEELPEADDLD).

In terms of assembly, interacts with MCM8; this interaction is necessary for MCM8-MCM9 helicase complex recruitment to DNA damage sites. Interacts with RPA1; this interaction associates HROB with the RPA complex.

It localises to the nucleus. The protein localises to the chromosome. Functionally, DNA-binding protein involved in homologous recombination that acts by recruiting the MCM8-MCM9 helicase complex to sites of DNA damage to promote DNA repair synthesis. This is Homologous recombination OB-fold protein from Homo sapiens (Human).